The sequence spans 536 residues: Alpha-1,3-mannosyl-glycoprotein 4-beta-N-acetylglucosaminyltransferase A (536 aa).

Residues 1 to 6 (MRLRNG) are Cytoplasmic-facing. Residues 7–27 (TVATALVFITTFLSLSWYTAW) traverse the membrane as a helical; Signal-anchor for type II membrane protein segment. Residues 28–54 (QNGKEKLMAYQREFHALKERLRIAEHR) are a coiled coil. Over 28–536 (QNGKEKLMAY…EIHIKRNPAD (509 aa)) the chain is Lumenal. Residues asparagine 77 and asparagine 458 are each glycosylated (N-linked (GlcNAc...) asparagine).

Belongs to the glycosyltransferase 54 family. Requires a divalent metal cation as cofactor. N-glycosylated.

It localises to the golgi apparatus membrane. The protein resides in the secreted. It catalyses the reaction N(4)-{beta-D-GlcNAc-(1-&gt;2)-alpha-D-Man-(1-&gt;3)-[beta-D-GlcNAc-(1-&gt;2)-alpha-D-Man-(1-&gt;6)]-beta-D-Man-(1-&gt;4)-beta-D-GlcNAc-(1-&gt;4)-beta-D-GlcNAc}-L-asparaginyl-[protein] + UDP-N-acetyl-alpha-D-glucosamine = N(4)-{beta-D-GlcNAc-(1-&gt;2)-[beta-D-GlcNAc-(1-&gt;4)]-alpha-D-Man-(1-&gt;3)-[beta-D-GlcNAc-(1-&gt;2)-alpha-D-Man-(1-&gt;6)]-beta-D-Man-(1-&gt;4)-beta-D-GlcNAc-(1-&gt;4)-beta-D-GlcNAc}-L-asparaginyl-[protein] + UDP + H(+). The enzyme catalyses an N(4)-{beta-D-GlcNAc-(1-&gt;2)-alpha-D-Man-(1-&gt;3)-[alpha-D-Man-(1-&gt;6)]-beta-D-Man-(1-&gt;4)-beta-D-GlcNAc-(1-&gt;4)-beta-D-GlcNAc}-L-asparaginyl-[protein] + UDP-N-acetyl-alpha-D-glucosamine = an N(4)-{beta-D-GlcNAc-(1-&gt;2)-[beta-D-GlcNAc-(1-&gt;4)]-alpha-D-Man-(1-&gt;3)-[alpha-D-Man-(1-&gt;6)]-beta-D-Man-(1-&gt;4)-beta-D-GlcNAc-(1-&gt;4)-beta-D-GlcNAc}-L-asparaginyl-[protein] + UDP + H(+). The catalysed reaction is an N(4)-{beta-D-GlcNAc-(1-&gt;2)-alpha-D-Man-(1-&gt;3)-[beta-D-GlcNAc-(1-&gt;2)-[beta-D-GlcNAc-(1-&gt;6)]-alpha-D-Man-(1-&gt;6)]-beta-D-Man-(1-&gt;4)-beta-D-GlcNAc-(1-&gt;4)-beta-D-GlcNAc}-L-asparaginyl-[protein] + UDP-N-acetyl-alpha-D-glucosamine = an N(4)-{beta-D-GlcNAc-(1-&gt;2)-[beta-D-GlcNAc-(1-&gt;4)]-alpha-D-Man-(1-&gt;3)-[beta-D-GlcNAc-(1-&gt;2)-[beta-D-GlcNAc-(1-&gt;6)]-alpha-D-Man-(1-&gt;6)]-beta-D-Man-(1-&gt;4)-beta-D-GlcNAc-(1-&gt;4)-beta-D-GlcNAc}-L-asparaginyl-[protein] + UDP + H(+). It carries out the reaction an N(4)-{beta-D-GlcNAc-(1-&gt;2)-alpha-D-Man-(1-&gt;3)-[beta-D-GlcNAc-(1-&gt;2)-alpha-D-Man-(1-&gt;6)]-beta-D-Man-(1-&gt;4)-beta-D-GlcNAc-(1-&gt;4)-[alpha-L-Fuc-(1-&gt;6)]-beta-D-GlcNAc}-L-asparaginyl-[protein] + UDP-N-acetyl-alpha-D-glucosamine = N(4)-{beta-D-GlcNAc-(1-&gt;2)-[beta-D-GlcNAc-(1-&gt;4)]-alpha-D-Man-(1-&gt;3)-[beta-D-GlcNAc-(1-&gt;2)-alpha-D-Man-(1-&gt;6)]-beta-D-Man-(1-&gt;4)-beta-D-GlcNAc-(1-&gt;4)-[alpha-L-Fuc-(1-&gt;6)]-beta-D-GlcNAc}-asparaginyl-[protein] + UDP + H(+). It catalyses the reaction an N(4)-{beta-D-GlcNAc-(1-&gt;2)-alpha-D-Man-(1-&gt;3)-[beta-D-Gal-(1-&gt;4)-beta-D-GlcNAc-(1-&gt;2)-alpha-D-Man-(1-&gt;6)]-beta-D-Man-(1-&gt;4)-beta-D-GlcNAc-(1-&gt;4)-beta-D-GlcNAc}-L-asparaginyl-[protein] + UDP-N-acetyl-alpha-D-glucosamine = an N(4)-{beta-D-GlcNAc-(1-&gt;2)-[beta-D-GlcNAc-(1-&gt;4)]-alpha-D-Man-(1-&gt;3)-[beta-D-Gal-(1-&gt;4)-beta-D-GlcNAc-(1-&gt;2)-alpha-D-Man-(1-&gt;6)]-beta-D-Man-(1-&gt;4)-beta-D-GlcNAc-(1-&gt;4)-beta-D-GlcNAc}-L-asparaginyl-[protein] + UDP + H(+). The enzyme catalyses N(4)-{beta-D-GlcNAc-(1-&gt;2)-alpha-D-Man-(1-&gt;3)-[alpha-D-Man-(1-&gt;3)-{alpha-D-Man-(1-&gt;6)}-alpha-D-Man-(1-&gt;6)]-beta-D-Man-(1-&gt;4)-beta-D-GlcNAc-(1-&gt;4)-beta-D-GlcNAc}-asparaginyl-[protein] + UDP-N-acetyl-alpha-D-glucosamine = N(4)-{beta-D-GlcNAc-(1-&gt;2)-[beta-D-GlcNAc-(1-&gt;4)]-alpha-D-Man-(1-&gt;3)-[alpha-D-Man-(1-&gt;3)-{alpha-D-Man-(1-&gt;6)}-alpha-D-Man-(1-&gt;6)]-beta-D-Man-(1-&gt;4)-beta-D-GlcNAc-(1-&gt;4)-beta-D-GlcNAc}-asparaginyl-[protein] + UDP + H(+). The catalysed reaction is N(4)-{beta-D-GlcNAc-(1-&gt;2)-alpha-D-Man-(1-&gt;3)-beta-D-Man-(1-&gt;4)-beta-D-GlcNAc-(1-&gt;4)-beta-D-GlcNAc}-asparaginyl-[protein] + UDP-N-acetyl-alpha-D-glucosamine = N(4)-{beta-D-GlcNAc-(1-&gt;2)-[beta-D-GlcNAc-(1-&gt;4)]-alpha-D-Man-(1-&gt;3)-beta-D-Man-(1-&gt;4)-beta-D-GlcNAc-(1-&gt;4)-beta-D-GlcNAc}-asparaginyl-[protein] + UDP + H(+). Its pathway is protein modification; protein glycosylation. With respect to regulation, inhibited by UDP. In terms of biological role, glycosyltransferase that catalyze the transfer of GlcNAc from UDP-GlcNAc to the GlcNAcbeta1-2Manalpha1-3 arm of the core structure of N-linked glycans through a beta1-4 linkage and participates in the production of tri- and tetra-antennary N-linked sugar chains. Involved in glucose transport by mediating SLC2A2/GLUT2 glycosylation, thereby controlling cell-surface expression of SLC2A2 in pancreatic beta cells. The protein is Alpha-1,3-mannosyl-glycoprotein 4-beta-N-acetylglucosaminyltransferase A of Xenopus tropicalis (Western clawed frog).